We begin with the raw amino-acid sequence, 153 residues long: UPF0178 protein Sfum_1097 (153 aa).

The protein belongs to the UPF0178 family.

This Syntrophobacter fumaroxidans (strain DSM 10017 / MPOB) protein is UPF0178 protein Sfum_1097.